Here is a 380-residue protein sequence, read N- to C-terminus: Beta-1,3-N-acetylglucosaminyltransferase lunatic fringe (380 aa).

Residues 1–8 (MLKRCGRR) are Cytoplasmic-facing. The helical; Signal-anchor for type II membrane protein transmembrane segment at 9-29 (LLLALAGALLACLLVLTADPP) threads the bilayer. Over 30-380 (PPPVPAERGR…TSWCPRSAIF (351 aa)) the chain is Lumenal. A disordered region spans residues 85–110 (SRRDVGPPPGGAPRPADGPPRPLAEP). The segment covering 90–107 (GPPPGGAPRPADGPPRPL) has biased composition (pro residues). Arginine 130 is a binding site for substrate. An N-linked (GlcNAc...) asparagine glycan is attached at asparagine 168. Disulfide bonds link cysteine 169–cysteine 180 and cysteine 198–cysteine 261. Aspartate 202 lines the substrate pocket. Aspartate 203 serves as a coordination point for Mn(2+). Residue aspartate 291 is part of the active site. Histidine 315 is a binding site for Mn(2+). Cysteine 365 and cysteine 374 form a disulfide bridge.

It belongs to the glycosyltransferase 31 family. It depends on Mn(2+) as a cofactor. Co(2+) serves as cofactor. In terms of processing, a soluble form may be derived from the membrane form by proteolytic processing.

Its subcellular location is the golgi apparatus. It is found in the golgi apparatus membrane. The catalysed reaction is 3-O-(alpha-L-fucosyl)-L-threonyl-[EGF-like domain protein] + UDP-N-acetyl-alpha-D-glucosamine = 3-O-(N-acetyl-beta-D-glucosaminyl-(1-&gt;3)-alpha-L-fucosyl)-L-threonyl-[EGF-like domain protein] + UDP + H(+). It catalyses the reaction 3-O-(alpha-L-fucosyl)-L-seryl-[EGF-like domain protein] + UDP-N-acetyl-alpha-D-glucosamine = 3-O-(N-acetyl-beta-D-glucosaminyl-(1-&gt;3)-alpha-L-fucosyl)-L-seryl-[EGF-like domain protein] + UDP + H(+). Functionally, glycosyltransferase that initiates the elongation of O-linked fucose residues attached to EGF-like repeats in the extracellular domain of Notch molecules. Modulates NOTCH1 activity by modifying O-fucose residues at specific EGF-like domains resulting in inhibition of NOTCH1 activation by JAG1 and enhancement of NOTCH1 activation by DLL1 via an increase in its binding to DLL1. Decreases the binding of JAG1 to NOTCH2 but not that of DLL1. Essential mediator of somite segmentation and patterning. In Bos taurus (Bovine), this protein is Beta-1,3-N-acetylglucosaminyltransferase lunatic fringe (LFNG).